A 188-amino-acid chain; its full sequence is Peptide deformylase (188 aa).

Residues Cys-109 and His-152 each coordinate Fe cation. The active site involves Glu-153. A Fe cation-binding site is contributed by His-156.

It belongs to the polypeptide deformylase family. Requires Fe(2+) as cofactor.

It carries out the reaction N-terminal N-formyl-L-methionyl-[peptide] + H2O = N-terminal L-methionyl-[peptide] + formate. Removes the formyl group from the N-terminal Met of newly synthesized proteins. Requires at least a dipeptide for an efficient rate of reaction. N-terminal L-methionine is a prerequisite for activity but the enzyme has broad specificity at other positions. In Chloroflexus aurantiacus (strain ATCC 29366 / DSM 635 / J-10-fl), this protein is Peptide deformylase.